Reading from the N-terminus, the 381-residue chain is Protein COS8 (381 aa).

At 1 to 42 (MKENEVKDEKSVDVLSFKQLEFQKTVLPQDVFRNELTWFCYE) the chain is on the extracellular side. A helical membrane pass occupies residues 43 to 63 (IYKSLAFRIWMLLWLPLSVWW). Residues 64–72 (KLSSNWIHP) lie on the Cytoplasmic side of the membrane. The chain crosses the membrane as a helical span at residues 73-93 (LIVSLLVLFLGPFFVLVICGL). Residues 94–237 (SRKRSLSKQL…WILKRIFNLR (144 aa)) lie on the Extracellular side of the membrane. Residues 238 to 258 (CLPLFLYYFLIVYTSGNADLI) form a helical membrane-spanning segment. Over 259–381 (SRFLFPVVMF…QSARNEKPLK (123 aa)) the chain is Cytoplasmic.

It belongs to the DUP/COS family.

The protein localises to the membrane. The chain is Protein COS8 (COS8) from Saccharomyces cerevisiae (strain ATCC 204508 / S288c) (Baker's yeast).